Consider the following 93-residue polypeptide: MLAVNEYFEGQVKSISFAGADKPASVGVMEAGEYEFGTAAPEVMQVISGALTVLLPGQAEWQTFSAGEQFDVIGDAKFQVKVATQTAYLCIYG.

It belongs to the nucleoside phosphorylase PpnP family.

The catalysed reaction is a purine D-ribonucleoside + phosphate = a purine nucleobase + alpha-D-ribose 1-phosphate. The enzyme catalyses adenosine + phosphate = alpha-D-ribose 1-phosphate + adenine. It carries out the reaction cytidine + phosphate = cytosine + alpha-D-ribose 1-phosphate. It catalyses the reaction guanosine + phosphate = alpha-D-ribose 1-phosphate + guanine. The catalysed reaction is inosine + phosphate = alpha-D-ribose 1-phosphate + hypoxanthine. The enzyme catalyses thymidine + phosphate = 2-deoxy-alpha-D-ribose 1-phosphate + thymine. It carries out the reaction uridine + phosphate = alpha-D-ribose 1-phosphate + uracil. It catalyses the reaction xanthosine + phosphate = alpha-D-ribose 1-phosphate + xanthine. Its function is as follows. Catalyzes the phosphorolysis of diverse nucleosides, yielding D-ribose 1-phosphate and the respective free bases. Can use uridine, adenosine, guanosine, cytidine, thymidine, inosine and xanthosine as substrates. Also catalyzes the reverse reactions. The polypeptide is Pyrimidine/purine nucleoside phosphorylase (Shewanella pealeana (strain ATCC 700345 / ANG-SQ1)).